The primary structure comprises 399 residues: Delta(12) acyl-lipid conjugase (11E,13E-forming) (399 aa).

Residues 11-30 (RNGGGPKKKMGPGQGLGPGE) form a disordered region. Helical transmembrane passes span 61-81 (FSYL…ADTY) and 93-113 (LAWP…WGIA). The Histidine box-1 motif lies at 114 to 118 (HDCGH). Residues 126–146 (LVDDVVGFLIHSLVFVPYFSF) form a helical membrane-spanning segment. The Histidine box-2 motif lies at 150–154 (HRRHH). The next 3 membrane-spanning stretches (helical) occupy residues 188 to 208 (VFII…FNIS), 232 to 252 (VLVH…YRIA), and 258 to 278 (GWLI…VVLI). The short motif at 325 to 329 (HVVHH) is the Histidine box-3 element.

Belongs to the fatty acid desaturase type 1 family. As to expression, expressed in developing seeds, but not in leaves.

The protein localises to the membrane. The enzyme catalyses a (9Z,12Z)-octadecadienoyl-containing glycerolipid + 2 Fe(II)-[cytochrome b5] + O2 + 2 H(+) = a (9Z,11E,13E)-octadecatrienoyl-containing glycerolipid + 2 Fe(III)-[cytochrome b5] + 2 H2O. It catalyses the reaction (9Z,12Z,15Z)-octadecatrienoyl-containing glycerolipid + 2 Fe(II)-[cytochrome b5] + O2 + 2 H(+) = a (9Z,11E,13E,15Z)-octadecatetraenoyl-containing glycerolipid + 2 Fe(III)-[cytochrome b5] + 2 H2O. The protein operates within lipid metabolism; polyunsaturated fatty acid biosynthesis. Its function is as follows. Converts linoleic acid to alpha-eleostearic acid (18:3(9Z,11E,13E)) and alpha-linolenic acid to alpha-parinaric acid (18:4(9Z,11E, 13E, 15Z)). Converts a single cis double bond at carbon 12 to two conjugated trans bonds at positions 11 and 13. This Momordica charantia (Bitter gourd) protein is Delta(12) acyl-lipid conjugase (11E,13E-forming).